The chain runs to 178 residues: uncharacterized protein (178 aa).

The next 4 membrane-spanning stretches (helical) occupy residues Ala29–Phe49, Val76–Leu96, Pro105–Phe125, and Ile139–Phe159.

The protein resides in the cell membrane. This is an uncharacterized protein from Bacillus subtilis (strain 168).